A 132-amino-acid polypeptide reads, in one-letter code: Small ribosomal subunit protein uS8c (132 aa).

The protein belongs to the universal ribosomal protein uS8 family. In terms of assembly, part of the 30S ribosomal subunit.

The protein localises to the plastid. It localises to the chloroplast. Functionally, one of the primary rRNA binding proteins, it binds directly to 16S rRNA central domain where it helps coordinate assembly of the platform of the 30S subunit. This is Small ribosomal subunit protein uS8c (rps8) from Acorus calamus (Sweet flag).